A 515-amino-acid polypeptide reads, in one-letter code: MATTLNPSEISDLIKTRIEAVKLSAESRNEGSVTSVSDGIVRIFGLADVMQGEMIELPNNTFALALNLERDSVGAVVLGDYENLREGDVAKTTGRILEVPVGPELLGRVVNALGEPIDGKGPLGATQTAPVERVAPGVIWRKSVDQPVQTGYKSVDAMIPIGRGQRELVIGDRQTGKTALAIDAVINQKGTGIKCVYVAIGQKASTVANIVRKLEENGALAHTVVVAATASESAAMQYISPYAGCTMGEYFMDRGEDALIVYDDLSKQAVAYRQISLLLKRPPGREAYPGDVFYLHSRLLERAARVSEEYVEKFTNGAVTGKTGSLTALPIIETQAGDVSAFVPTNVISITDGQIFLETDLFNAGIRPAVNAGISVSRVGGAAQTKIIKKLSGGIRISLAQYRELAAFAQFASDLDEATRKQLERGQRVTELMKQKQYAPMSIANQALSIYAVNEGYLDEVPVNKLLAFEEGLHAHFANTQGELVSKINTTGGWDNDIEAAFKKGIEEFKTTGSW.

171–178 (GDRQTGKT) is a binding site for ATP.

This sequence belongs to the ATPase alpha/beta chains family. As to quaternary structure, F-type ATPases have 2 components, CF(1) - the catalytic core - and CF(0) - the membrane proton channel. CF(1) has five subunits: alpha(3), beta(3), gamma(1), delta(1), epsilon(1). CF(0) has three main subunits: a(1), b(2) and c(9-12). The alpha and beta chains form an alternating ring which encloses part of the gamma chain. CF(1) is attached to CF(0) by a central stalk formed by the gamma and epsilon chains, while a peripheral stalk is formed by the delta and b chains.

Its subcellular location is the cell inner membrane. The enzyme catalyses ATP + H2O + 4 H(+)(in) = ADP + phosphate + 5 H(+)(out). Its function is as follows. Produces ATP from ADP in the presence of a proton gradient across the membrane. The alpha chain is a regulatory subunit. The protein is ATP synthase subunit alpha of Xanthomonas campestris pv. campestris (strain 8004).